A 185-amino-acid chain; its full sequence is Ribosome-recycling factor (185 aa).

It belongs to the RRF family.

It localises to the cytoplasm. Functionally, responsible for the release of ribosomes from messenger RNA at the termination of protein biosynthesis. May increase the efficiency of translation by recycling ribosomes from one round of translation to another. The chain is Ribosome-recycling factor from Clostridium acetobutylicum (strain ATCC 824 / DSM 792 / JCM 1419 / IAM 19013 / LMG 5710 / NBRC 13948 / NRRL B-527 / VKM B-1787 / 2291 / W).